The sequence spans 372 residues: MAAPVAPSEPQASRAPQPPVCLLVLGMAGSGKTTFVQRLTGHLHNKGCPPYVINLDPAVHEVPFPANIDIRDTVKYKEVMKQYGLGPNGGIVTSLNLFATRFDQVMKFIEKAQNTFRYVLIDTPGQIEVFTWSASGTIITEALASSFPTVVIYVMDTSRSTNPVTFMSNMLYACSILYKTKLPFIVVMNKTDIIDHSFAVEWMQDFEAFQDALNQETTYVSNLTRSMSLVLDEFYSSLRVVGVSAVVGTGFDELCTQVTSAAEEYEREYRPEYERLKKSLANAQSNQQKEQLERLRKDMGSVALDPEAGKGNASPVLDPSDLILTRGTLDEEDEEADSDTDDIDHRVTEESREEPAFQNFMEESMAHWKRNK.

The residue at position 2 (alanine 2) is an N-acetylalanine. Position 29–34 (glycine 29–threonine 34) interacts with GTP. The short motif at glycine 86–asparagine 88 is the Gly-Pro-Asn (GPN)-loop; involved in dimer interface element. Asparagine 189–aspartate 192 contributes to the GTP binding site. Phosphoserine is present on residues serine 301 and serine 314. The interval alanine 303 to lysine 372 is disordered. Threonine 328 carries the phosphothreonine modification. Over residues aspartate 330–aspartate 342 the composition is skewed to acidic residues. Phosphoserine is present on serine 338. At threonine 340 the chain carries Phosphothreonine. Over residues isoleucine 343–proline 355 the composition is skewed to basic and acidic residues.

The protein belongs to the GPN-loop GTPase family. As to quaternary structure, heterodimer with GPN3. Binds to RNA polymerase II (RNAPII). Interacts directly with RNAPII subunits RPB4 and RPB7 and the CTD of RPB1. Interacts with XPA.

It localises to the cytoplasm. The protein localises to the nucleus. Functionally, small GTPase required for proper nuclear import of RNA polymerase II (RNAPII). May act at an RNAP assembly step prior to nuclear import. Forms an interface between the RNA polymerase II enzyme and chaperone/scaffolding proteins, suggesting that it is required to connect RNA polymerase II to regulators of protein complex formation. May be involved in nuclear localization of XPA. This chain is GPN-loop GTPase 1, found in Mus musculus (Mouse).